The primary structure comprises 303 residues: Methionyl-tRNA formyltransferase (303 aa).

A (6S)-5,6,7,8-tetrahydrofolate-binding site is contributed by 108-111 (SDLP).

This sequence belongs to the Fmt family.

The catalysed reaction is L-methionyl-tRNA(fMet) + (6R)-10-formyltetrahydrofolate = N-formyl-L-methionyl-tRNA(fMet) + (6S)-5,6,7,8-tetrahydrofolate + H(+). Functionally, attaches a formyl group to the free amino group of methionyl-tRNA(fMet). The formyl group appears to play a dual role in the initiator identity of N-formylmethionyl-tRNA by promoting its recognition by IF2 and preventing the misappropriation of this tRNA by the elongation apparatus. The polypeptide is Methionyl-tRNA formyltransferase (Rickettsia canadensis (strain McKiel)).